A 593-amino-acid chain; its full sequence is UvrABC system protein C (593 aa).

The 79-residue stretch at T13–V91 folds into the GIY-YIG domain. One can recognise a UVR domain in the interval D202–I237.

It belongs to the UvrC family. Interacts with UvrB in an incision complex.

Its subcellular location is the cytoplasm. In terms of biological role, the UvrABC repair system catalyzes the recognition and processing of DNA lesions. UvrC both incises the 5' and 3' sides of the lesion. The N-terminal half is responsible for the 3' incision and the C-terminal half is responsible for the 5' incision. The polypeptide is UvrABC system protein C (Caldicellulosiruptor saccharolyticus (strain ATCC 43494 / DSM 8903 / Tp8T 6331)).